Here is a 122-residue protein sequence, read N- to C-terminus: Small ribosomal subunit protein uS13 (122 aa).

Residues 97–122 (PVRGQKTKSNARTRKGPRPSRIKKKK) are disordered. The segment covering 101–122 (QKTKSNARTRKGPRPSRIKKKK) has biased composition (basic residues).

Belongs to the universal ribosomal protein uS13 family. As to quaternary structure, part of the 30S ribosomal subunit. Forms a loose heterodimer with protein S19. Forms two bridges to the 50S subunit in the 70S ribosome.

Its function is as follows. Located at the top of the head of the 30S subunit, it contacts several helices of the 16S rRNA. In the 70S ribosome it contacts the 23S rRNA (bridge B1a) and protein L5 of the 50S subunit (bridge B1b), connecting the 2 subunits; these bridges are implicated in subunit movement. Contacts the tRNAs in the A and P-sites. In Thermosipho melanesiensis (strain DSM 12029 / CIP 104789 / BI429), this protein is Small ribosomal subunit protein uS13.